A 1523-amino-acid chain; its full sequence is Disco-interacting protein 2 homolog A (1523 aa).

In terms of domain architecture, DMAP1-binding spans 9–105; sequence EAAPLPAEVL…TSSASEDEGS (97 aa). The tract at residues 72–110 is disordered; sequence KMPMPSKRRSALVHSSVETYTPPDTSSASEDEGSLRRPG. Over residues 87-99 the composition is skewed to polar residues; the sequence is SVETYTPPDTSSA. T92 and T115 each carry phosphothreonine. The segment at 132-158 is disordered; sequence QGSSTSSSASSTSSHPGGRPAAAPSAS. Residues 134-158 show a composition bias toward low complexity; that stretch reads SSTSSSASSTSSHPGGRPAAAPSAS. 2 short sequence motifs (PXXP motif; required for interaction with CTTN) span residues 235–238 and 259–262; these read PKRP and PNQP.

The protein belongs to the DIP2 family. Interacts with FSTL1; DIP2A may act as a cell surface receptor for FSTL1. Interacts (via N-terminus) with CTTN (via SH3 domain); the interaction promotes acetylation of CTTN and is required for proper synaptic transmission. Interacts with SHANK3. As to expression, detected in heart, liver, spleen, lung, kidney and brain with highest levels in brain (at protein level). In adult cortex, preferentially expressed in excitatory neurons. Broadly expressed in neuronal, reproductive and vascular tissues as well as in heart, kidney, liver and lung with expression detected in neurons, mesenchyme, endothelium, smooth muscle cells and cardiomyocytes. Expressed in ectoderm-derived tissues in the developing embryo. Expressed in the developing nervous system.

Its subcellular location is the cell membrane. The protein localises to the mitochondrion. The protein resides in the cell projection. It is found in the dendritic spine. The catalysed reaction is acetate + ATP + CoA = acetyl-CoA + AMP + diphosphate. Catalyzes the de novo synthesis of acetyl-CoA in vitro. Promotes acetylation of CTTN, possibly by providing the acetyl donor, ensuring correct dendritic spine morphology and synaptic transmission. Binds to follistatin-related protein FSTL1 and may act as a cell surface receptor for FSTL1, contributing to AKT activation and subsequent FSTL1-induced survival and function of endothelial cells and cardiac myocytes. The chain is Disco-interacting protein 2 homolog A (Dip2a) from Mus musculus (Mouse).